Consider the following 105-residue polypeptide: Small ribosomal subunit protein uS10 (105 aa).

Belongs to the universal ribosomal protein uS10 family. Part of the 30S ribosomal subunit.

Its function is as follows. Involved in the binding of tRNA to the ribosomes. The sequence is that of Small ribosomal subunit protein uS10 from Nitratidesulfovibrio vulgaris (strain DSM 19637 / Miyazaki F) (Desulfovibrio vulgaris).